The following is a 933-amino-acid chain: Probable Rho-type GTPase-activating protein 4 (933 aa).

LIM zinc-binding domains are found at residues Cys22–Asp80 and Ile81–Cys129. 2 disordered regions span residues Pro181 to Arg200 and Glu304 to Thr338. The span at Arg325–Thr338 shows a compositional bias: polar residues. Phosphoserine is present on Ser353. Disordered regions lie at residues Arg415 to Ala435, Ser605 to Glu628, and Gly641 to Ser660. Polar residues predominate over residues Arg619 to Glu628. Phosphoserine is present on Ser625. The segment covering Arg643–Ser652 has biased composition (basic and acidic residues). 2 positions are modified to phosphoserine: Ser738 and Ser740. The Rho-GAP domain maps to Asn753 to Phe932.

In terms of biological role, GTPase-activating protein for Rho-type proteins. This Schizosaccharomyces pombe (strain 972 / ATCC 24843) (Fission yeast) protein is Probable Rho-type GTPase-activating protein 4 (rga4).